The following is a 387-amino-acid chain: Solute carrier family 25 protein Shawn (387 aa).

Solcar repeat units lie at residues 37-156 (IRPL…FKAR), 179-263 (IPFL…LKSS), and 269-366 (PTFS…GKSF). Transmembrane regions (helical) follow at residues 43–63 (VASACTGAMVTACFMTPLDVI), 128–148 (LWSGLSPTLISALPSTIIYFV), 179–199 (IPFLVPLLAGVSGRILAVTCV), 235–255 (LWRGLPPTILRDVPFSGIYWT), 275–295 (FAAGAISGSVAATITTPFDVV), and 337–357 (AIFSGLGPRLFKVAPACAIMI).

It belongs to the mitochondrial carrier (TC 2.A.29) family.

The protein resides in the mitochondrion inner membrane. Mitochondrial transporter required for glutathione import into mitochondria. The chain is Solute carrier family 25 protein Shawn from Drosophila melanogaster (Fruit fly).